Consider the following 203-residue polypeptide: Enterotoxin-like toxin X (203 aa).

The tract at residues 164-180 (YTLESHKELQKNRENVE) is sialic acid-binding motif.

Belongs to the staphylococcal/streptococcal toxin family.

The protein resides in the secreted. In terms of biological role, plays a role in the inhibition of the host innate immune system. Inhibits phagocytosis and killing by human neutrophils by interacting with multiple neutrophil surface glycoproteins in a sialic acid-dependent manner. This chain is Enterotoxin-like toxin X, found in Staphylococcus aureus.